A 332-amino-acid chain; its full sequence is MTSPAVTSADITGLVGIVPTPSKPGSEAPDAVDTVDLDETARMVELIVASGVDVLLTNGTFGEVATLTYEELLAFNDTVIRTVANRIPVFCGASTLNTRDTIARSLALMGLGANGLFVGRPMWLPLDDEQLVSYYAAVCDAVPAAAVVVYDNTGVFKGKISSAAYAALAEIPQIVASKHLGVLSGSDAYASDLAAVKGRFPLLPTADNWLPSLEAFPGEVPAAWSGDVACGPEPVMALRRAIAEGLWDDARAVHEDIAWATEPLFPGGDISKFMPYSIQIDRAEFEAAGYIVPGPSRHPYGTAPAAYLEGGAEVGRRWAGIRQKYVATLAEP.

The active-site Schiff-base intermediate with substrate is lysine 178.

The protein belongs to the DapA family. Homotrimer.

The catalysed reaction is (3Z)-4-(2-carboxyphenyl)-2-oxobut-3-enoate + H2O = 2-formylbenzoate + pyruvate. Its activity is regulated as follows. Not inhibited by sodium borohydride or sodium pyruvate. Unaffected by EDTA, EGTA, Mn(2+), Mg(2+) and Ca(2+). Its function is as follows. Plays a role in phenanthrene catabolism. Catalyzes the transformation of trans-2'-carboxbenzalpyruvate to 2-formylbenzoate and pyruvate. This is Trans-2'-carboxybenzalpyruvate hydratase-aldolase from Nocardioides sp. (strain KP7).